Here is a 514-residue protein sequence, read N- to C-terminus: Acetylcholine receptor subunit gamma (514 aa).

A signal peptide spans 1–22 (MRCSDLLLLFLLALCVLPGISC). At 23–241 (RNQEEKLLQD…VIFYLIIQRK (219 aa)) the chain is on the extracellular side. The cysteines at positions 150 and 164 are disulfide-linked. Asparagine 163 carries N-linked (GlcNAc...) asparagine glycosylation. The next 3 helical transmembrane spans lie at 242-266 (PLFY…VYFL), 275-293 (CTVS…FLIA), and 309-330 (YLTF…VLNV). The Cytoplasmic portion of the chain corresponds to 331–473 (SLRTPNTHSM…WILVGRVIDR (143 aa)). Tyrosine 386 carries the phosphotyrosine; by Tyr-kinases modification. A helical membrane pass occupies residues 474–494 (VCFFIMASLFVCGTIGIFLMA).

The protein belongs to the ligand-gated ion channel (TC 1.A.9) family. Acetylcholine receptor (TC 1.A.9.1) subfamily. Gamma/CHRNG sub-subfamily. Pentamer of two alpha chains, and one each of the beta, delta, and gamma chains.

Its subcellular location is the postsynaptic cell membrane. The protein resides in the cell membrane. It carries out the reaction K(+)(in) = K(+)(out). It catalyses the reaction Na(+)(in) = Na(+)(out). Functionally, after binding acetylcholine, the AChR responds by an extensive change in conformation that affects all subunits and leads to opening of an ion-conducting channel across the plasma membrane. The chain is Acetylcholine receptor subunit gamma (CHRNG) from Gallus gallus (Chicken).